Consider the following 553-residue polypeptide: MNIIDQVKQTLVEEIAASINKAGLADEIPDIKIEVPKDTKNGDYATNIAMVLTKIAKRNPREIAQAIVDNLDTEKAHVKQIDIAGPGFINFYLDNQYLTAIIPEAIEKGDQFGYVNESKGQNVLLEYVSANPTGDLHIGHARNAAVGDALANILTAAGYNVTREYYINDAGNQITNLARSIETRFFEALGDNSYSMPEDGYNGKDIIEIGKDLAEKRPEIKDYSEEARLKEFRKLGVEYEMAKLKNDLAEFNTHFDNWFSETSLYEKGEILEVLAKMKELGYTYEADGATWLRTTDFKDDKDRVLIKNDGTYTYFLPDIAYHFDKVKRGNDILIDLFGADHHGYINRLKASLETFGVDSNRLEIQIMQMVRLMENGKEVKMSKRTGNAITLREIMDEVGVDAARYFLTMRSPDSHFDFDMELAKEQSQDNPVYYAQYAHARICSILKQAKEQGIEVAAANDFTTITNEKAIELLKKVADFEPTIESAAEHRSAHRITNYIQDLASHFHKFYNAEKVLTDDIEKTKAHVAMIEAVRITLKNALAMVGVSAPESM.

The 'HIGH' region motif lies at alanine 130–histidine 140.

This sequence belongs to the class-I aminoacyl-tRNA synthetase family. As to quaternary structure, monomer.

The protein resides in the cytoplasm. It carries out the reaction tRNA(Arg) + L-arginine + ATP = L-arginyl-tRNA(Arg) + AMP + diphosphate. The polypeptide is Arginine--tRNA ligase (Staphylococcus aureus (strain bovine RF122 / ET3-1)).